The primary structure comprises 592 residues: Pyruvate decarboxylase 3 (592 aa).

Residues Asp-54 and His-141 each contribute to the substrate site. A thiamine pyrophosphate binding region spans residues 419–501 (DSWFNCQKLK…FLINNGGYTI (83 aa)). Positions 469, 496, and 498 each coordinate Mg(2+). A substrate-binding site is contributed by Glu-502.

Belongs to the TPP enzyme family. In terms of assembly, homotetramer. A metal cation serves as cofactor. It depends on thiamine diphosphate as a cofactor. In terms of tissue distribution, expressed at low levels in roots and shoots.

The catalysed reaction is a 2-oxocarboxylate + H(+) = an aldehyde + CO2. This Arabidopsis thaliana (Mouse-ear cress) protein is Pyruvate decarboxylase 3 (PDC3).